The sequence spans 390 residues: GTPase Obg (390 aa).

The Obg domain occupies 1–159; the sequence is MKFVDEAVVK…REIRLELLLL (159 aa). An OBG-type G domain is found at 160–333; sequence ADVGMLGLPN…LCYKLADFME (174 aa). GTP-binding positions include 166-173, 191-195, 213-216, 283-286, and 314-316; these read GLPNAGKS, FTTLI, DIPG, NKVD, and SAI. Residues S173 and T193 each contribute to the Mg(2+) site. The span at 367 to 382 shows a compositional bias: acidic residues; sequence TEDDDDWDDWDDEEDD. Residues 367–390 are disordered; that stretch reads TEDDDDWDDWDDEEDDGHVVYVRD.

It belongs to the TRAFAC class OBG-HflX-like GTPase superfamily. OBG GTPase family. Monomer. Requires Mg(2+) as cofactor.

The protein localises to the cytoplasm. An essential GTPase which binds GTP, GDP and possibly (p)ppGpp with moderate affinity, with high nucleotide exchange rates and a fairly low GTP hydrolysis rate. Plays a role in control of the cell cycle, stress response, ribosome biogenesis and in those bacteria that undergo differentiation, in morphogenesis control. The protein is GTPase Obg of Vibrio parahaemolyticus serotype O3:K6 (strain RIMD 2210633).